The sequence spans 1499 residues: Rho GTPase-activating protein 35 (1499 aa).

The has GTPase activity, required for proper localization stretch occupies residues 1-266 (MMMARKQDVR…IPYFEALKQQ (266 aa)). GTP-binding positions include Lys28, 33-37 (IGKSC), Leu52, Ser56, 95-97 (EQT), 201-203 (KCD), and 229-231 (SAR). FF domains follow at residues 270–327 (IATA…HIHR), 368–422 (KLLE…HLEK), 429–483 (RAEM…HQKQ), and 485–550 (IDRA…HIHF). A Phosphotyrosine modification is found at Tyr308. Ser589 is modified (phosphoserine). Residues 592–767 (DLNIDRINLV…LLDSKRNLNL (176 aa)) enclose the pG1 pseudoGTPase domain. Residues Ser770 and Ser773 each carry the phosphoserine modification. A pG2 pseudoGTPase domain is found at 783 to 947 (RIVMCLMCGD…FKDVVEKKNI (165 aa)). Phosphoserine occurs at positions 970, 975, 985, and 1072. Tyr1087 bears the Phosphotyrosine mark. Tyr1105 is subject to Phosphotyrosine; by ABL2 and PTK6. The segment covering 1124-1141 (KAQSNGSGNGSDSEMDTS) has biased composition (polar residues). Residues 1124–1148 (KAQSNGSGNGSDSEMDTSSLERGRK) form a disordered region. Ser1134, Ser1142, Ser1150, Ser1176, Ser1179, and Ser1221 each carry phosphoserine. The disordered stretch occupies residues 1177–1207 (VGSDDELGPIRKKEEDQASQGYKGDNAVIPY). Residues 1213-1236 (PRRRNILRSLRRNTKKPKPKPRPS) are required for phospholipid binding and regulation of the substrate preference. Thr1226 is subject to Phosphothreonine. Position 1236 is a phosphoserine (Ser1236). Residues 1249–1436 (VPLTTVVTPE…LFIQQCPFFF (188 aa)) enclose the Rho-GAP domain. The interval 1446 to 1499 (GAAPGSPSAMAPTVPFLTSTPATSQPSPPQSPPPTPQSPMQPLLSSQLQAEHTL) is disordered. Low complexity predominate over residues 1448 to 1470 (APGSPSAMAPTVPFLTSTPATSQ). Pro residues predominate over residues 1471–1484 (PSPPQSPPPTPQSP). 2 positions are modified to phosphoserine: Ser1472 and Ser1476. Thr1480 bears the Phosphothreonine mark. Residue Ser1483 is modified to Phosphoserine. Over residues 1485–1499 (MQPLLSSQLQAEHTL) the composition is skewed to low complexity.

In terms of assembly, interacts with the general transcription factor GTF2I, the interaction sequesters GTF2I in the cytoplasm. Interacts with RASA1. Post-translationally, phosphorylation of Tyr-1105 by PTK6 promotes the association with RASA1, inactivating RHOA while activating RAS. Phosphorylation at Tyr-308 by PDGFRA inhibits binding to GTF2I. Phosphorylated by PRKCA at Ser-1221 and Thr-1226, induces relocalization from the cytoplasm to regions of plasma membrane ruffling and prevents the binding and substrate specificity regulation by phospholipids. In brain, phosphorylated by FYN and SRC. During focal adhesion formation, phosphorylated by MAPK1 and MAPK3 at the C-terminal region, probably at Ser-1451, Ser-1476, Thr-1480 and Ser-1483. Phosphorylation by MAPK1 and MAPK3 inhibits GAP function and localizes ARGHAP35 away from newly forming focal adhesions and stress fibers in cells spreading on fibronectin. Phosphorylation at Ser-1476 and Thr-1480 by GSK3B requires priming by MAPK and inhibits RhoGAP activity and modulates polarized cell migration. As to expression, expressed in the developing kidneys. Expressed in all regions of the mature nervous system (at protein level). Detected in neutrophils (at protein level).

Its subcellular location is the cytoplasm. The protein resides in the cytoskeleton. The protein localises to the cilium basal body. It localises to the nucleus. It is found in the cell membrane. Functionally, rho GTPase-activating protein (GAP). Binds several acidic phospholipids which inhibits the Rho GAP activity to promote the Rac GAP activity. This binding is inhibited by phosphorylation by PRKCA. Involved in cell differentiation as well as cell adhesion and migration, plays an important role in retinal tissue morphogenesis, neural tube fusion, midline fusion of the cerebral hemispheres and mammary gland branching morphogenesis. Transduces signals from p21-ras to the nucleus, acting via the ras GTPase-activating protein (GAP). Transduces SRC-dependent signals from cell-surface adhesion molecules, such as laminin, to promote neurite outgrowth. Regulates axon outgrowth, guidance and fasciculation. Modulates Rho GTPase-dependent F-actin polymerization, organization and assembly, is involved in polarized cell migration and in the positive regulation of ciliogenesis and cilia elongation. During mammary gland development, is required in both the epithelial and stromal compartments for ductal outgrowth. Represses transcription of the glucocorticoid receptor by binding to the cis-acting regulatory sequence 5'-GAGAAAAGAAACTGGAGAAACTC-3'; this function is however unclear and would need additional experimental evidences. The sequence is that of Rho GTPase-activating protein 35 from Mus musculus (Mouse).